A 197-amino-acid chain; its full sequence is CASP-like protein 1B2 (197 aa).

Ala-2 is modified (N-acetylalanine). Over Ala-2–Lys-17 the chain is Cytoplasmic. The helical transmembrane segment at Leu-18–Ser-38 threads the bilayer. Residues Leu-39–Ala-69 are Extracellular-facing. Residues Phe-70 to Leu-90 traverse the membrane as a helical segment. Over Gln-91–Ser-106 the chain is Cytoplasmic. The chain crosses the membrane as a helical span at residues Ile-107–Phe-127. Residues Val-128–Ala-156 lie on the Extracellular side of the membrane. The helical transmembrane segment at Gly-157–Ile-177 threads the bilayer. Over Ser-178–Val-197 the chain is Cytoplasmic.

It belongs to the Casparian strip membrane proteins (CASP) family. As to quaternary structure, homodimer and heterodimers.

The protein resides in the cell membrane. This Arabidopsis lyrata subsp. lyrata (Lyre-leaved rock-cress) protein is CASP-like protein 1B2.